A 475-amino-acid polypeptide reads, in one-letter code: Aspartyl/glutamyl-tRNA(Asn/Gln) amidotransferase subunit B (475 aa).

It belongs to the GatB/GatE family. GatB subfamily. As to quaternary structure, heterotrimer of A, B and C subunits.

The enzyme catalyses L-glutamyl-tRNA(Gln) + L-glutamine + ATP + H2O = L-glutaminyl-tRNA(Gln) + L-glutamate + ADP + phosphate + H(+). It catalyses the reaction L-aspartyl-tRNA(Asn) + L-glutamine + ATP + H2O = L-asparaginyl-tRNA(Asn) + L-glutamate + ADP + phosphate + 2 H(+). Its function is as follows. Allows the formation of correctly charged Asn-tRNA(Asn) or Gln-tRNA(Gln) through the transamidation of misacylated Asp-tRNA(Asn) or Glu-tRNA(Gln) in organisms which lack either or both of asparaginyl-tRNA or glutaminyl-tRNA synthetases. The reaction takes place in the presence of glutamine and ATP through an activated phospho-Asp-tRNA(Asn) or phospho-Glu-tRNA(Gln). This Pediococcus pentosaceus (strain ATCC 25745 / CCUG 21536 / LMG 10740 / 183-1w) protein is Aspartyl/glutamyl-tRNA(Asn/Gln) amidotransferase subunit B.